Consider the following 122-residue polypeptide: Small ribosomal subunit protein uS13 (122 aa).

The disordered stretch occupies residues 98-122 (VRGQRTHTNARTRKGPAKAIAGKKK).

The protein belongs to the universal ribosomal protein uS13 family. In terms of assembly, part of the 30S ribosomal subunit. Forms a loose heterodimer with protein S19. Forms two bridges to the 50S subunit in the 70S ribosome.

Located at the top of the head of the 30S subunit, it contacts several helices of the 16S rRNA. In the 70S ribosome it contacts the 23S rRNA (bridge B1a) and protein L5 of the 50S subunit (bridge B1b), connecting the 2 subunits; these bridges are implicated in subunit movement. Contacts the tRNAs in the A and P-sites. This chain is Small ribosomal subunit protein uS13, found in Ruegeria sp. (strain TM1040) (Silicibacter sp.).